The sequence spans 432 residues: Asparagine--tRNA ligase 2 (432 aa).

It belongs to the class-II aminoacyl-tRNA synthetase family. In terms of assembly, homodimer.

The protein localises to the cytoplasm. It catalyses the reaction tRNA(Asn) + L-asparagine + ATP = L-asparaginyl-tRNA(Asn) + AMP + diphosphate + H(+). The polypeptide is Asparagine--tRNA ligase 2 (asnS2) (Lactiplantibacillus plantarum (strain ATCC BAA-793 / NCIMB 8826 / WCFS1) (Lactobacillus plantarum)).